We begin with the raw amino-acid sequence, 925 residues long: ETO1-like protein 2 (925 aa).

The BTB domain occupies 207 to 307 (SDISFCVGSE…ECEARLAASV (101 aa)). Residues 409–442 (ALSLHQMGCVLFERKDYKAAQFHFRLASSLGHVY) form a TPR 1 repeat. A coiled-coil region spans residues 509-533 (KYRAVMKFEQKQIKEAFQEIDRLIQ). TPR repeat units follow at residues 538–571 (PECL…EPNY), 664–697 (AERL…QRSF), 738–771 (GQAL…KHIR), 773–803 (RQGL…SCSK), 834–867 (TYPY…RPEL), and 869–900 (TLHL…DPNH).

The protein belongs to the ETO1 family. As to quaternary structure, interacts with the C-terminal domain of ACS5. Constitutively expressed in green and etiolated seedlings.

It participates in protein modification; protein ubiquitination. Potential regulator of the ethylene pathway, which acts by regulating the stability of 1-aminocyclopropane-1-carboxylate synthase (ACS) enzymes. May act as a substrate-specific adapter that connects ACS enzymes, such as ACS5, to ubiquitin ligase complexes, leading to proteasomal degradation of ACS enzymes. In Arabidopsis thaliana (Mouse-ear cress), this protein is ETO1-like protein 2 (EOL2).